Reading from the N-terminus, the 78-residue chain is HssA/B-like protein 30 (78 aa).

Positions 1-32 (MTLFSSITSISKTNTSSKSSVNSLSGSSLSMG) are disordered.

The protein belongs to the hssA/B family.

The polypeptide is HssA/B-like protein 30 (hssl30) (Dictyostelium discoideum (Social amoeba)).